The following is a 676-amino-acid chain: Methionine--tRNA ligase (676 aa).

A 'HIGH' region motif is present at residues 11-21 (PYANGPCHLGH). Positions 143, 146, 156, and 159 each coordinate Zn(2+). The 'KMSKS' region signature appears at 326 to 330 (KMSTS). T329 provides a ligand contact to ATP. One can recognise a tRNA-binding domain in the interval 581–676 (EFGKVKLVVG…TEGNVGEYIK (96 aa)).

The protein belongs to the class-I aminoacyl-tRNA synthetase family. MetG type 1 subfamily. As to quaternary structure, homodimer. The cofactor is Zn(2+).

It localises to the cytoplasm. The enzyme catalyses tRNA(Met) + L-methionine + ATP = L-methionyl-tRNA(Met) + AMP + diphosphate. In terms of biological role, is required not only for elongation of protein synthesis but also for the initiation of all mRNA translation through initiator tRNA(fMet) aminoacylation. The chain is Methionine--tRNA ligase from Methanosphaera stadtmanae (strain ATCC 43021 / DSM 3091 / JCM 11832 / MCB-3).